Reading from the N-terminus, the 336-residue chain is tRNA pseudouridine synthase D (336 aa).

Catalysis depends on D84, which acts as the Nucleophile. Residues 164 to 298 (GVPNYFGEQR…TPSYRWLVGD (135 aa)) form the TRUD domain.

Belongs to the pseudouridine synthase TruD family.

It catalyses the reaction uridine(13) in tRNA = pseudouridine(13) in tRNA. Responsible for synthesis of pseudouridine from uracil-13 in transfer RNAs. This Cellvibrio japonicus (strain Ueda107) (Pseudomonas fluorescens subsp. cellulosa) protein is tRNA pseudouridine synthase D.